A 162-amino-acid polypeptide reads, in one-letter code: Cyanate hydratase (162 aa).

Residues R102, E105, and S128 contribute to the active site.

Belongs to the cyanase family.

It carries out the reaction cyanate + hydrogencarbonate + 3 H(+) = NH4(+) + 2 CO2. In terms of biological role, catalyzes the reaction of cyanate with bicarbonate to produce ammonia and carbon dioxide. The sequence is that of Cyanate hydratase from Mycosarcoma maydis (Corn smut fungus).